The primary structure comprises 337 residues: Ferrochelatase (337 aa).

The Fe cation site is built by His189 and Glu293.

It belongs to the ferrochelatase family.

It localises to the cytoplasm. The catalysed reaction is heme b + 2 H(+) = protoporphyrin IX + Fe(2+). It functions in the pathway porphyrin-containing compound metabolism; protoheme biosynthesis; protoheme from protoporphyrin-IX: step 1/1. In terms of biological role, catalyzes the ferrous insertion into protoporphyrin IX. The protein is Ferrochelatase of Pseudomonas putida (strain W619).